The following is a 332-amino-acid chain: Ketol-acid reductoisomerase (NADP(+)) (332 aa).

The KARI N-terminal Rossmann domain occupies 4-184 (ARMYYDEDAD…GGTRAGILET (181 aa)). Residues 27 to 30 (YGSQ), S53, S55, and 85 to 88 (DEVQ) contribute to the NADP(+) site. H110 is a catalytic residue. G136 provides a ligand contact to NADP(+). Residues 185 to 330 (TFREEAETDL…ADLRKMMSWL (146 aa)) enclose the KARI C-terminal knotted domain. Mg(2+) contacts are provided by D193, E197, E229, and E233. S254 provides a ligand contact to substrate.

It belongs to the ketol-acid reductoisomerase family. Mg(2+) serves as cofactor.

The catalysed reaction is (2R)-2,3-dihydroxy-3-methylbutanoate + NADP(+) = (2S)-2-acetolactate + NADPH + H(+). The enzyme catalyses (2R,3R)-2,3-dihydroxy-3-methylpentanoate + NADP(+) = (S)-2-ethyl-2-hydroxy-3-oxobutanoate + NADPH + H(+). The protein operates within amino-acid biosynthesis; L-isoleucine biosynthesis; L-isoleucine from 2-oxobutanoate: step 2/4. It participates in amino-acid biosynthesis; L-valine biosynthesis; L-valine from pyruvate: step 2/4. Functionally, involved in the biosynthesis of branched-chain amino acids (BCAA). Catalyzes an alkyl-migration followed by a ketol-acid reduction of (S)-2-acetolactate (S2AL) to yield (R)-2,3-dihydroxy-isovalerate. In the isomerase reaction, S2AL is rearranged via a Mg-dependent methyl migration to produce 3-hydroxy-3-methyl-2-ketobutyrate (HMKB). In the reductase reaction, this 2-ketoacid undergoes a metal-dependent reduction by NADPH to yield (R)-2,3-dihydroxy-isovalerate. This chain is Ketol-acid reductoisomerase (NADP(+)), found in Gloeobacter violaceus (strain ATCC 29082 / PCC 7421).